We begin with the raw amino-acid sequence, 214 residues long: Holliday junction branch migration complex subunit RuvA (214 aa).

The domain I stretch occupies residues 1–67 (MVGWLKGLIV…ADNWQFFGFK (67 aa)). A domain II region spans residues 68 to 146 (STQERDIFRE…AFAGMDPAPS (79 aa)). The tract at residues 147–154 (LAEGVSSE) is flexible linker. The interval 155–214 (QMPESGADVEATLSMLGYDDLEVRRAIRAIAEGSDGPPPPGDDQDAWLRGCLQWLSRDSA) is domain III.

It belongs to the RuvA family. Homotetramer. Forms an RuvA(8)-RuvB(12)-Holliday junction (HJ) complex. HJ DNA is sandwiched between 2 RuvA tetramers; dsDNA enters through RuvA and exits via RuvB. An RuvB hexamer assembles on each DNA strand where it exits the tetramer. Each RuvB hexamer is contacted by two RuvA subunits (via domain III) on 2 adjacent RuvB subunits; this complex drives branch migration. In the full resolvosome a probable DNA-RuvA(4)-RuvB(12)-RuvC(2) complex forms which resolves the HJ.

The protein localises to the cytoplasm. The RuvA-RuvB-RuvC complex processes Holliday junction (HJ) DNA during genetic recombination and DNA repair, while the RuvA-RuvB complex plays an important role in the rescue of blocked DNA replication forks via replication fork reversal (RFR). RuvA specifically binds to HJ cruciform DNA, conferring on it an open structure. The RuvB hexamer acts as an ATP-dependent pump, pulling dsDNA into and through the RuvAB complex. HJ branch migration allows RuvC to scan DNA until it finds its consensus sequence, where it cleaves and resolves the cruciform DNA. This is Holliday junction branch migration complex subunit RuvA from Synechococcus sp. (strain CC9605).